The chain runs to 337 residues: Tert-butanol monooxygenase / tert-amyl alcohol desaturase reductase subunit (337 aa).

The FAD-binding FR-type domain occupies Lys9–Ile114. One can recognise a 2Fe-2S ferredoxin-type domain in the interval Phe254–Leu337. [2Fe-2S] cluster contacts are provided by Cys288, Cys293, Cys296, and Cys324.

It belongs to the PDR/VanB family. As to quaternary structure, this two-component enzyme is composed of an oxygenase (MdpJ) and a reductase (MdpK). The cofactor is [2Fe-2S] cluster.

Reductase component of a two-component system involved in the degradation of tertiary alcohols such as tert-butyl alcohol (TBA) and tert-amyl alcohol (TAA). MdpK probably provides electrons via its [2Fe-2S] iron-sulfur cluster to the MdpJ oxygenase subunit. The polypeptide is Tert-butanol monooxygenase / tert-amyl alcohol desaturase reductase subunit (Aquincola tertiaricarbonis).